The chain runs to 305 residues: Leucine-rich repeat-containing protein 25 (305 aa).

The signal sequence occupies residues 1–20 (MGGTLAWTLLLPLLLRESDS). Over 21 to 165 (LEPSCTVSSA…SCAPGLASAT (145 aa)) the chain is Extracellular. LRR repeat units follow at residues 39 to 59 (SATC…QSLR), 62 to 83 (NVIL…FFAH), and 86 to 107 (KLEV…LAAR). Residues Asn-44 and Asn-55 are each glycosylated (N-linked (GlcNAc...) asparagine). Asn-130 and Asn-148 each carry an N-linked (GlcNAc...) asparagine glycan. A helical transmembrane segment spans residues 166–186 (IGAVVVSGCLLLGLAIAGPVL). Topologically, residues 187-305 (AWRLWRCRVA…DEEEYVIPGH (119 aa)) are cytoplasmic. The interval 204–229 (PWAAQDGPKPGLGLQPRYGSRSAPKP) is disordered. Tyr-284 carries the post-translational modification Phosphotyrosine.

Interacts with RIGI. Interacts with SQSTM1. Interacts with p65/RELA; this interaction promotes the degradation of RELA through autophagy. As to expression, expressed in plasmacytoid dendritic cells (PDC), monocyte-derived dendritic cells (MDDC), granulocytes, monocytes, B-lymphocytes, peripheral blood leukocytes, spleen, bone marrow, and, to a lesser extent, lymph nodes, fetal liver, and appendix but not in thymus.

The protein localises to the membrane. Its subcellular location is the cytoplasm. Its function is as follows. Plays a role in the inhibition of RLR-mediated type I interferon signaling pathway by targeting RIGI for autophagic degradation. Interacts specifically with ISG15-associated RIGI to promote interaction between RIGI and the autophagic cargo receptor p62/SQSTM1 to mediate RIGI degradation via selective autophagy. Also plays a role in the inhibition of NF-kappa-B signaling pathway and inflammatory response by promoting the degradation of p65/RELA. In Homo sapiens (Human), this protein is Leucine-rich repeat-containing protein 25 (LRRC25).